The sequence spans 417 residues: Gamma-glutamyl phosphate reductase (417 aa).

This sequence belongs to the gamma-glutamyl phosphate reductase family.

It is found in the cytoplasm. It catalyses the reaction L-glutamate 5-semialdehyde + phosphate + NADP(+) = L-glutamyl 5-phosphate + NADPH + H(+). The protein operates within amino-acid biosynthesis; L-proline biosynthesis; L-glutamate 5-semialdehyde from L-glutamate: step 2/2. Its function is as follows. Catalyzes the NADPH-dependent reduction of L-glutamate 5-phosphate into L-glutamate 5-semialdehyde and phosphate. The product spontaneously undergoes cyclization to form 1-pyrroline-5-carboxylate. The sequence is that of Gamma-glutamyl phosphate reductase from Streptococcus agalactiae serotype Ia (strain ATCC 27591 / A909 / CDC SS700).